Consider the following 710-residue polypeptide: Lactoperoxidase (710 aa).

The signal sequence occupies residues 1–22 (MKVLLRLPALLASLTLLQMAAS). Residues 23-98 (TRNATRTATI…WEQSLKRLRR (76 aa)) constitute a propeptide that is removed on maturation. 3 N-linked (GlcNAc...) asparagine glycosylation sites follow: Asn25, Asn104, and Asn131. A disulfide bond links Cys130 and Cys143. Asp223 is a heme b binding site. His224 acts as the Proton acceptor in catalysis. Residue Asp225 participates in Ca(2+) binding. Asn238 carries N-linked (GlcNAc...) asparagine glycosylation. Cystine bridges form between Cys244/Cys254 and Cys248/Cys272. Thr299, Phe301, Asp303, and Ser305 together coordinate Ca(2+). The residue at position 313 (Ser313) is a Phosphoserine. Residue Asn320 is glycosylated (N-linked (GlcNAc...) asparagine). A disulfide bond links Cys352 and Cys363. Heme b is bound by residues Glu373 and His466. Residue Tyr480 is modified to 3'-nitrotyrosine. Cystine bridges form between Cys571-Cys628 and Cys669-Cys694.

The protein belongs to the peroxidase family. XPO subfamily. Requires Ca(2+) as cofactor. Heme b serves as cofactor. Expressed in the lacrimal gland with higher levels and 3-fold higher activity in adult females than males and secreted into tears (at protein level).

It localises to the secreted. Its subcellular location is the cytoplasm. It catalyses the reaction 2 a phenolic donor + H2O2 = 2 a phenolic radical donor + 2 H2O. The catalysed reaction is thiocyanate + H2O2 + H(+) = hypothiocyanous acid + H2O. It carries out the reaction iodide + H2O2 = hypoiodite + H2O. In terms of biological role, heme-containing oxidoreductase which catalyzes the conversion of thiocyanate (SCN(-)) into antimicrobial agent hypothiocyanous acid (OSCN(-)) in the presence of hydrogen peroxide (H2O2). Also involved in the conversion of iodide (I(-)) into hypoiodite (IO(-)) in the presence of H2O2. Responsible for the inactivation of a wide range of micro-organisms and hence, important component of defense mechanism. May be implicated in airway host defense against infection. May contribute to maintaining an appropriate H2O2 cellular level, therefore protecting cells from H2O2-caused injuries and inflammation. The polypeptide is Lactoperoxidase (LPO) (Mesocricetus auratus (Golden hamster)).